The chain runs to 195 residues: FMN-dependent NADH:quinone oxidoreductase (195 aa).

FMN contacts are provided by residues Ser-10, 16-18 (SVS), and 88-91 (MYNF).

It belongs to the azoreductase type 1 family. Homodimer. FMN serves as cofactor.

It catalyses the reaction 2 a quinone + NADH + H(+) = 2 a 1,4-benzosemiquinone + NAD(+). The enzyme catalyses N,N-dimethyl-1,4-phenylenediamine + anthranilate + 2 NAD(+) = 2-(4-dimethylaminophenyl)diazenylbenzoate + 2 NADH + 2 H(+). Quinone reductase that provides resistance to thiol-specific stress caused by electrophilic quinones. In terms of biological role, also exhibits azoreductase activity. Catalyzes the reductive cleavage of the azo bond in aromatic azo compounds to the corresponding amines. The polypeptide is FMN-dependent NADH:quinone oxidoreductase (Francisella philomiragia subsp. philomiragia (strain ATCC 25017 / CCUG 19701 / FSC 153 / O#319-036)).